An 81-amino-acid polypeptide reads, in one-letter code: ATP synthase subunit c (81 aa).

Helical transmembrane passes span 7–27 and 53–73; these read FVALAAGLIIGLGAIGACIGI and FLLAGLIDAAFLIGVGIAMMF.

It belongs to the ATPase C chain family. In terms of assembly, F-type ATPases have 2 components, F(1) - the catalytic core - and F(0) - the membrane proton channel. F(1) has five subunits: alpha(3), beta(3), gamma(1), delta(1), epsilon(1). F(0) has three main subunits: a(1), b(2) and c(10-14). The alpha and beta chains form an alternating ring which encloses part of the gamma chain. F(1) is attached to F(0) by a central stalk formed by the gamma and epsilon chains, while a peripheral stalk is formed by the delta and b chains.

Its subcellular location is the cell inner membrane. Its function is as follows. F(1)F(0) ATP synthase produces ATP from ADP in the presence of a proton or sodium gradient. F-type ATPases consist of two structural domains, F(1) containing the extramembraneous catalytic core and F(0) containing the membrane proton channel, linked together by a central stalk and a peripheral stalk. During catalysis, ATP synthesis in the catalytic domain of F(1) is coupled via a rotary mechanism of the central stalk subunits to proton translocation. In terms of biological role, key component of the F(0) channel; it plays a direct role in translocation across the membrane. A homomeric c-ring of between 10-14 subunits forms the central stalk rotor element with the F(1) delta and epsilon subunits. This Azoarcus sp. (strain BH72) protein is ATP synthase subunit c.